The following is a 385-amino-acid chain: Probable endopeptidase MT2245 (385 aa).

The span at 235–257 shows a compositional bias: pro residues; that stretch reads AALPPGAPPGDGPAPGVAPPPGG. The disordered stretch occupies residues 235 to 268; the sequence is AALPPGAPPGDGPAPGVAPPPGGMPGLPFVQPDG. One can recognise a NlpC/P60 domain in the interval 270–385; that stretch reads GGDRTAVVQA…SGPIYDARRY (116 aa). The active-site Nucleophile is the C300. H348 acts as the Proton acceptor in catalysis. Residue H360 is part of the active site.

The protein belongs to the peptidase C40 family.

The chain is Probable endopeptidase MT2245 from Mycobacterium tuberculosis (strain CDC 1551 / Oshkosh).